The chain runs to 312 residues: 4-diphosphocytidyl-2-C-methyl-D-erythritol kinase (312 aa).

The active site involves Lys-10. 105 to 115 (PVAGGMAGGSA) is a binding site for ATP. Residue Asp-146 is part of the active site.

Belongs to the GHMP kinase family. IspE subfamily.

It carries out the reaction 4-CDP-2-C-methyl-D-erythritol + ATP = 4-CDP-2-C-methyl-D-erythritol 2-phosphate + ADP + H(+). It participates in isoprenoid biosynthesis; isopentenyl diphosphate biosynthesis via DXP pathway; isopentenyl diphosphate from 1-deoxy-D-xylulose 5-phosphate: step 3/6. In terms of biological role, catalyzes the phosphorylation of the position 2 hydroxy group of 4-diphosphocytidyl-2C-methyl-D-erythritol. The polypeptide is 4-diphosphocytidyl-2-C-methyl-D-erythritol kinase (Corynebacterium glutamicum (strain R)).